We begin with the raw amino-acid sequence, 443 residues long: Thymidine phosphorylase (443 aa).

This sequence belongs to the thymidine/pyrimidine-nucleoside phosphorylase family. Homodimer.

The enzyme catalyses thymidine + phosphate = 2-deoxy-alpha-D-ribose 1-phosphate + thymine. It functions in the pathway pyrimidine metabolism; dTMP biosynthesis via salvage pathway; dTMP from thymine: step 1/2. Its function is as follows. The enzymes which catalyze the reversible phosphorolysis of pyrimidine nucleosides are involved in the degradation of these compounds and in their utilization as carbon and energy sources, or in the rescue of pyrimidine bases for nucleotide synthesis. The protein is Thymidine phosphorylase of Shewanella woodyi (strain ATCC 51908 / MS32).